The following is a 446-amino-acid chain: NADH-ubiquinone oxidoreductase chain 4 (446 aa).

Transmembrane regions (helical) follow at residues 4–24 (LILM…FWMV), 28–48 (LFVI…FVNI), 56–76 (VLSY…IVAS), 88–105 (LFLF…LTFS), 109–131 (LFMF…LGWG), 141–161 (VYLL…IFYL), 182–202 (LLYL…LVHL), 218–238 (ILAG…FSFL), 245–265 (YNYI…LVCL), 272–292 (ALIA…LMTL), 297–317 (LSGS…LFCL), 330–350 (LLIN…WFLL), 373–393 (IVSW…FSAA), and 426–446 (FLHW…LFWI).

It belongs to the complex I subunit 4 family.

It localises to the mitochondrion membrane. The enzyme catalyses a ubiquinone + NADH + 5 H(+)(in) = a ubiquinol + NAD(+) + 4 H(+)(out). Its function is as follows. Core subunit of the mitochondrial membrane respiratory chain NADH dehydrogenase (Complex I) that is believed to belong to the minimal assembly required for catalysis. Complex I functions in the transfer of electrons from NADH to the respiratory chain. The immediate electron acceptor for the enzyme is believed to be ubiquinone. The polypeptide is NADH-ubiquinone oxidoreductase chain 4 (ND4) (Ceratitis capitata (Mediterranean fruit fly)).